The following is a 336-amino-acid chain: UPF0284 protein PYRAB00380 (336 aa).

Belongs to the UPF0284 family.

The polypeptide is UPF0284 protein PYRAB00380 (Pyrococcus abyssi (strain GE5 / Orsay)).